The following is an 852-amino-acid chain: Leucine--tRNA ligase (852 aa).

Positions 41–51 (PYPSGRIHIGH) match the 'HIGH' region motif. Residues 623 to 627 (KMSKS) carry the 'KMSKS' region motif. Residue K626 coordinates ATP.

Belongs to the class-I aminoacyl-tRNA synthetase family.

It is found in the cytoplasm. The enzyme catalyses tRNA(Leu) + L-leucine + ATP = L-leucyl-tRNA(Leu) + AMP + diphosphate. This chain is Leucine--tRNA ligase, found in Ruegeria pomeroyi (strain ATCC 700808 / DSM 15171 / DSS-3) (Silicibacter pomeroyi).